Consider the following 73-residue polypeptide: Translational regulator CsrA (73 aa).

The protein belongs to the CsrA/RsmA family. As to quaternary structure, homodimer; the beta-strands of each monomer intercalate to form a hydrophobic core, while the alpha-helices form wings that extend away from the core.

The protein resides in the cytoplasm. Its function is as follows. A translational regulator that binds mRNA to regulate translation initiation and/or mRNA stability. Usually binds in the 5'-UTR at or near the Shine-Dalgarno sequence preventing ribosome-binding, thus repressing translation. Its main target seems to be the major flagellin gene, while its function is anatagonized by FliW. The polypeptide is Translational regulator CsrA (Clostridium acetobutylicum (strain ATCC 824 / DSM 792 / JCM 1419 / IAM 19013 / LMG 5710 / NBRC 13948 / NRRL B-527 / VKM B-1787 / 2291 / W)).